We begin with the raw amino-acid sequence, 120 residues long: Small ribosomal subunit protein uS13 (120 aa).

Residues 92–120 (HRKGLPVRGQTTKNNARTRKGKKKTVGSK) are disordered. Residues 107-120 (ARTRKGKKKTVGSK) are compositionally biased toward basic residues.

Belongs to the universal ribosomal protein uS13 family. As to quaternary structure, part of the 30S ribosomal subunit. Forms a loose heterodimer with protein S19. Forms two bridges to the 50S subunit in the 70S ribosome.

Its function is as follows. Located at the top of the head of the 30S subunit, it contacts several helices of the 16S rRNA. In the 70S ribosome it contacts the 23S rRNA (bridge B1a) and protein L5 of the 50S subunit (bridge B1b), connecting the 2 subunits; these bridges are implicated in subunit movement. Contacts the tRNAs in the A and P-sites. The polypeptide is Small ribosomal subunit protein uS13 (Helicobacter pylori (strain J99 / ATCC 700824) (Campylobacter pylori J99)).